The chain runs to 149 residues: Limonene-1,2-epoxide hydrolase (149 aa).

Asp101 (proton donor) is an active-site residue. The active-site Proton acceptor is Asp132.

This sequence belongs to the limonene-1,2-epoxide hydrolase family. Monomer.

It catalyses the reaction limonene 1,2-epoxide + H2O = limonene-1,2-diol. It functions in the pathway terpene metabolism; (4R)-limonene degradation; (1S,4R)-1-hydroxylimonen-2-one from (4R)-limonene: step 2/3. Its function is as follows. Catalyzes the conversion of limonene-1,2-epoxide to limonene-1,2-diol. Can use both the (-) and (+) isomers of limonene-1,2-epoxide as substrates and also has some activity with 1-methylcyclohexene oxide, cyclohexene oxide and indene oxide as substrates. This is Limonene-1,2-epoxide hydrolase (limA) from Rhodococcus erythropolis (Arthrobacter picolinophilus).